Reading from the N-terminus, the 343-residue chain is L-threonine 3-dehydrogenase (343 aa).

Zn(2+) is bound at residue C38. Active-site charge relay system residues include T40 and H43. Residues H63, E64, C93, C96, C99, and C107 each coordinate Zn(2+). Residues I175, D195, R200, L262–I264, and I286–Y287 contribute to the NAD(+) site.

Belongs to the zinc-containing alcohol dehydrogenase family. In terms of assembly, homotetramer. Zn(2+) serves as cofactor.

Its subcellular location is the cytoplasm. The enzyme catalyses L-threonine + NAD(+) = (2S)-2-amino-3-oxobutanoate + NADH + H(+). It functions in the pathway amino-acid degradation; L-threonine degradation via oxydo-reductase pathway; glycine from L-threonine: step 1/2. Its function is as follows. Catalyzes the NAD(+)-dependent oxidation of L-threonine to 2-amino-3-ketobutyrate. This Burkholderia mallei (strain NCTC 10247) protein is L-threonine 3-dehydrogenase.